The following is a 320-amino-acid chain: Putative GDP-polyphosphate phosphotransferase PKK2A (320 aa).

Disordered regions lie at residues 1 to 21 (MRKKKDGQNLPDFRKNPPKLD), 246 to 267 (RPLPEIPHRPDSESDYVRPPRD), and 281 to 320 (EERIKKEEKAKKAKKPAKAAGKNSDKQKSSGGKGKKKSKK). Residues 12–21 (DFRKNPPKLD) are compositionally biased toward basic and acidic residues. Positions 281-290 (EERIKKEEKA) are enriched in basic and acidic residues.

It belongs to the polyphosphate kinase 2 (PPK2) family. Class I subfamily.

It catalyses the reaction [phosphate](n) + GTP = [phosphate](n+1) + GDP. The protein is Putative GDP-polyphosphate phosphotransferase PKK2A of Corynebacterium glutamicum (strain ATCC 13032 / DSM 20300 / JCM 1318 / BCRC 11384 / CCUG 27702 / LMG 3730 / NBRC 12168 / NCIMB 10025 / NRRL B-2784 / 534).